Reading from the N-terminus, the 346-residue chain is Uroporphyrinogen decarboxylase (346 aa).

Residues 26 to 30 (RQAGR), aspartate 76, tyrosine 153, serine 208, and histidine 323 contribute to the substrate site.

The protein belongs to the uroporphyrinogen decarboxylase family. In terms of assembly, homodimer.

The protein localises to the cytoplasm. The catalysed reaction is uroporphyrinogen III + 4 H(+) = coproporphyrinogen III + 4 CO2. It functions in the pathway porphyrin-containing compound metabolism; protoporphyrin-IX biosynthesis; coproporphyrinogen-III from 5-aminolevulinate: step 4/4. In terms of biological role, catalyzes the decarboxylation of four acetate groups of uroporphyrinogen-III to yield coproporphyrinogen-III. The protein is Uroporphyrinogen decarboxylase of Prochlorococcus marinus (strain MIT 9301).